The chain runs to 117 residues: MSHRDTGTHYENQARHYLERAGLVFKAANVTYQNGEIDLIMRDGDTWVFVEVRFRRNALFGGAAASVTYSKQQRLLRAATIWLAQRNACFATTPCRFDVFAITGSELEWLPNAFNAD.

It belongs to the UPF0102 family.

In Yersinia enterocolitica serotype O:8 / biotype 1B (strain NCTC 13174 / 8081), this protein is UPF0102 protein YE3728.